Here is an 83-residue protein sequence, read N- to C-terminus: Sulfur carrier protein TusA (83 aa).

Catalysis depends on Cys-20, which acts as the Cysteine persulfide intermediate.

It belongs to the sulfur carrier protein TusA family.

Its subcellular location is the cytoplasm. Functionally, sulfur carrier protein which probably makes part of a sulfur-relay system. The protein is Sulfur carrier protein TusA of Pseudoalteromonas atlantica (strain T6c / ATCC BAA-1087).